The sequence spans 378 residues: MDLAGLLKSQFLCHLVFCYVFIASGLIINTIQLFTLLLWPINKQLFRKINCRLSYCISSQLVMLLEWWSGTECTIFTDPRAYLKYGKENAIVVLNHKFEIDFLCGWSLSERFGLLGGSKVLAKKELAYVPIIGWMWYFTEMVFCSRKWEQDRKTVATSLQHLRDYPEKYFFLIHCEGTRFTEKKHEISMQVARAKGLPRLKHHLLPRTKGFAITVRSLRNVVSAVYDCTLNFRNNENPTLLGVLNGKKYHADLYVRRIPLEDIPEDDDECSAWLHKLYQEKDAFQEEYYRTGTFPETPMVPPRRPWTLVNWLFWASLVLYPFFQFLVSMIRSGSSLTLASFILVFFVASVGVRWMIGVTEIDKGSAYGNSDSKQKLND.

A helical membrane pass occupies residues 11-31 (FLCHLVFCYVFIASGLIINTI). Positions 96 to 101 (HKFEID) match the HXXXXD motif motif. Helical transmembrane passes span 125-145 (ELAYVPIIGWMWYFTEMVFCS), 307-327 (TLVNWLFWASLVLYPFFQFLV), and 338-358 (LASFILVFFVASVGVRWMIGV).

This sequence belongs to the 1-acyl-sn-glycerol-3-phosphate acyltransferase family. Widely expressed with highest levels in skeletal muscle, followed by heart, liver, prostate and thymus.

It localises to the endoplasmic reticulum membrane. It carries out the reaction a 1-acyl-sn-glycero-3-phosphate + an acyl-CoA = a 1,2-diacyl-sn-glycero-3-phosphate + CoA. The enzyme catalyses (4Z,7Z,10Z,13Z,16Z,19Z)-docosahexaenoyl-CoA + 1-hexadecanoyl-sn-glycero-3-phosphate = 1-hexadecanoyl-2-(4Z,7Z,10Z,13Z,16Z,19Z-docosahexaenoyl)-sn-glycero-3-phosphate + CoA. It catalyses the reaction 1-octadecanoyl-sn-glycero-3-phosphate + (9Z,12Z)-octadecadienoyl-CoA = 1-octadecanoyl-2-(9Z,12Z-octadecadienoyl)-sn-glycero-3-phosphate + CoA. The catalysed reaction is 1-octadecanoyl-sn-glycero-3-phosphate + (4Z,7Z,10Z,13Z,16Z,19Z)-docosahexaenoyl-CoA = 1-octadecanoyl-2-(4Z,7Z,10Z,13Z,16Z,19Z-docosahexaenoyl)-sn-glycero-3-phosphate + CoA. It carries out the reaction (4Z,7Z,10Z,13Z,16Z,19Z)-docosahexaenoyl-CoA + 1-(9Z-octadecenoyl)-sn-glycero-3-phosphate = 1-(9Z-octadecenoyl)-2-(4Z,7Z,10Z,13Z,16Z,19Z-docosahexaenoyl)-sn-glycero-3-phosphate + CoA. It functions in the pathway phospholipid metabolism; CDP-diacylglycerol biosynthesis; CDP-diacylglycerol from sn-glycerol 3-phosphate: step 2/3. Its function is as follows. Converts 1-acyl-sn-glycerol-3-phosphate (lysophosphatidic acid or LPA) into 1,2-diacyl-sn-glycerol-3-phosphate (phosphatidic acid or PA) by incorporating an acyl moiety at the sn-2 position of the glycerol backbone. Exhibits high acyl-CoA specificity for polyunsaturated fatty acyl-CoA, especially docosahexaenoyl-CoA (22:6-CoA, DHA-CoA). The chain is 1-acyl-sn-glycerol-3-phosphate acyltransferase delta (AGPAT4) from Homo sapiens (Human).